The chain runs to 1559 residues: Arginine-glutamic acid dipeptide repeats protein (1559 aa).

Residues 1-36 (MTADKDKDKDKEKDRDRDRDRERDKRDKARESENAR) show a composition bias toward basic and acidic residues. The tract at residues 1-89 (MTADKDKDKD…KKKSRYERTD (89 aa)) is disordered. Phosphoserine occurs at positions 53 and 56. Residues 73–84 (KSRKKPPKKKSR) are compositionally biased toward basic residues. Residues 102–282 (VVYRPGDCVY…PETRRLNSTQ (181 aa)) enclose the BAH domain. Thr-119 is subject to Phosphothreonine. Ser-141 and Ser-303 each carry phosphoserine. An ELM2 domain is found at 283–386 (GEIRVGPSHQ…KALQRLVKKP (104 aa)). In terms of domain architecture, SANT spans 390-442 (LIEKCWTEDEVKRFVKGLRQYGKNFFRIRKELLPNKETGELITFYYYWKKTPE). Positions 463–494 (TRTASTPVNTPSRPPSSEFLDLSSASEDDFDS) are disordered. A compositionally biased stretch (polar residues) spans 464 to 473 (RTASTPVNTP). Positions 478-487 (SSEFLDLSSA) are enriched in low complexity. A GATA-type zinc finger spans residues 507–532 (RHCFTTTSKDWHHGGRENILLCTDCR). A disordered region spans residues 541–1125 (LPPIEKPVDP…PSHASQSARF (585 aa)). Residue Lys-559 forms a Glycyl lysine isopeptide (Lys-Gly) (interchain with G-Cter in SUMO2) linkage. Residues Ser-593, Ser-599, and Ser-612 each carry the phosphoserine modification. Low complexity predominate over residues 608–622 (SGRNSPSAASTSSND). Residues 623–639 (SKAEAVKKSAKKVKEEA) show a composition bias toward basic and acidic residues. Lys-636 is covalently cross-linked (Glycyl lysine isopeptide (Lys-Gly) (interchain with G-Cter in SUMO2)). Ser-641, Ser-655, Ser-674, and Ser-678 each carry phosphoserine. Basic and acidic residues predominate over residues 651–672 (EKVASDTEDTDRATSKKTKTQE). Residues 687–707 (SDSRSVNDEGSSDPKDIDQDN) are compositionally biased toward basic and acidic residues. Residues 708-735 (RSTSPSIPSPQDNESDSDSSAQQQMLQT) show a composition bias toward polar residues. Residues 736 to 761 (QPPALQAPSGAASAPSTAPPGTTQLP) are compositionally biased toward low complexity. Residues 768-791 (SATTVPPQGSPATSQPPNQTQSTV) are compositionally biased toward polar residues. Pro residues predominate over residues 805–822 (LHPPRLPSPHPPLQPMTA). Low complexity predominate over residues 890–900 (QLPASQSALQP). Over residues 901–931 (QQPPREQPLPPAPLAMPHIKPPPTTPIPQLP) the composition is skewed to pro residues. Low complexity predominate over residues 961 to 971 (KPLSSLSTHHP). Over residues 1027 to 1053 (PQHPFVPGGPPPITPPSCPPTSTPPAG) the composition is skewed to pro residues. The span at 1054-1068 (PSSSSQPPCSAAVSS) shows a compositional bias: low complexity. 3 positions are modified to phosphoserine: Ser-1098, Ser-1105, and Ser-1107. The segment covering 1098-1109 (SPPPPPRSPSPE) has biased composition (pro residues). Phosphothreonine is present on Thr-1111. Residues 1148 to 1205 (GSKLAKKREEAIEKAKREAEQKAREEREREKEKEKEREREREREREAERAAQKASSSA) are a coiled coil. Lys-1150 carries the N6-acetyllysine modification. A compositionally biased stretch (basic and acidic residues) spans 1154 to 1198 (KREEAIEKAKREAEQKAREEREREKEKEKEREREREREREAERAA). Positions 1154 to 1239 (KREEAIEKAK…TTIAAVPPYI (86 aa)) are disordered. Tyr-1252 carries the post-translational modification Phosphotyrosine. Ser-1259 is modified (phosphoserine).

As to quaternary structure, interacts with HDAC1 and ATN1. Interaction with ATN1 is improved when the poly-Gln region of ATN1 is extended. In terms of tissue distribution, widely expressed.

It localises to the nucleus. Its subcellular location is the PML body. In terms of biological role, plays a role as a transcriptional repressor during development. May play a role in the control of cell survival. Interacts with FAT1. This is Arginine-glutamic acid dipeptide repeats protein (Rere) from Rattus norvegicus (Rat).